Reading from the N-terminus, the 268-residue chain is Cell division coordinator CpoB (268 aa).

Residues M1 to A21 form the signal peptide. A coiled-coil region spans residues Q58 to R94. The interval S104–A146 is disordered. The segment covering S121–G143 has biased composition (low complexity). TPR repeat units lie at residues K149 to S181, G185 to H218, and P222 to T255.

Belongs to the CpoB family.

The protein localises to the periplasm. Functionally, mediates coordination of peptidoglycan synthesis and outer membrane constriction during cell division. This chain is Cell division coordinator CpoB, found in Pseudomonas putida (strain ATCC 47054 / DSM 6125 / CFBP 8728 / NCIMB 11950 / KT2440).